The following is a 948-amino-acid chain: Coatomer subunit beta-1 (948 aa).

HEAT repeat units follow at residues 49 to 87, 92 to 126, 127 to 164, 274 to 311, 312 to 349, and 391 to 428; these read ETIP…TDSK, PEMI…MKET, EIVE…LPQG, TAIR…TLHR, DIMV…HHNI, and EVAS…TNPK.

In terms of assembly, oligomeric complex that consists of at least the alpha, beta, beta', gamma, delta, epsilon and zeta subunits.

Its subcellular location is the cytoplasm. It localises to the golgi apparatus membrane. The protein localises to the cytoplasmic vesicle. It is found in the COPI-coated vesicle membrane. The coatomer is a cytosolic protein complex that binds to dilysine motifs and reversibly associates with Golgi non-clathrin-coated vesicles, which further mediate biosynthetic protein transport from the ER, via the Golgi up to the trans Golgi network. Coatomer complex is required for budding from Golgi membranes, and is essential for the retrograde Golgi-to-ER transport of dilysine-tagged proteins. This chain is Coatomer subunit beta-1, found in Arabidopsis thaliana (Mouse-ear cress).